A 214-amino-acid chain; its full sequence is Large ribosomal subunit protein uL1 (214 aa).

It belongs to the universal ribosomal protein uL1 family. As to quaternary structure, part of the 50S ribosomal subunit.

Its function is as follows. Binds directly to 23S rRNA. Probably involved in E site tRNA release. In terms of biological role, protein L1 is also a translational repressor protein, it controls the translation of its operon by binding to its mRNA. In Methanopyrus kandleri (strain AV19 / DSM 6324 / JCM 9639 / NBRC 100938), this protein is Large ribosomal subunit protein uL1.